The following is a 140-amino-acid chain: Putative pre-16S rRNA nuclease (140 aa).

The protein belongs to the YqgF nuclease family.

It localises to the cytoplasm. Functionally, could be a nuclease involved in processing of the 5'-end of pre-16S rRNA. The chain is Putative pre-16S rRNA nuclease from Mannheimia succiniciproducens (strain KCTC 0769BP / MBEL55E).